A 361-amino-acid polypeptide reads, in one-letter code: S-adenosylmethionine-dependent nucleotide dehydratase RSAD2 (361 aa).

The Radical SAM core domain occupies 69–289; it reads PTTPTSVNYH…LERHKEVSCL (221 aa). [4Fe-4S] cluster-binding residues include Cys83, Cys87, and Cys90. Position 197 is an N6-acetyllysine (Lys197). Lys206 is covalently cross-linked (Glycyl lysine isopeptide (Lys-Gly) (interchain with G-Cter in ubiquitin)).

This sequence belongs to the radical SAM superfamily. RSAD2 family. Homodimer. Interacts with IRAK1 and TRAF6. Interacts with FPPS. Interacts with HADHB. Interacts (via C-terminus) with VAPA/VAP33 (via C-terminus). As to quaternary structure, (Microbial infection) Interacts with human cytomegalovirus/HHV-5 protein vMIA/UL37; this interaction results in RSAD2/viperin relocalization from the endoplasmic reticulum to the mitochondria. In terms of assembly, (Microbial infection) Interacts (via N-terminus) with enterovirus A71 protein 2C; this interaction inhibits viral replication. (Microbial infection) Interacts with herpes simplex virus 1/HHV-1 glycoprotein D; this interaction inhibits HHV-1 replication by facilitating IRF7-mediated IFN-beta production. [4Fe-4S] cluster serves as cofactor. In terms of processing, acetylated by HAT1. HAT1-mediated acetylation of Lys-197 in turn recruits UBE4A that stimulates RSAD2 polyubiquitination leading to proteasomal degradation. Post-translationally, 'Lys-6'-linked polyubiquitination at Lys-206 leads to RSAD2 protein degradation.

The protein localises to the endoplasmic reticulum membrane. The protein resides in the golgi apparatus. Its subcellular location is the endoplasmic reticulum. It is found in the lipid droplet. It localises to the mitochondrion. The protein localises to the mitochondrion inner membrane. The protein resides in the mitochondrion outer membrane. It catalyses the reaction CTP + AH2 + S-adenosyl-L-methionine = 3'-deoxy-3',4'-didehydro-CTP + 5'-deoxyadenosine + L-methionine + A + H2O + H(+). IRAK1 and TRAF6 synergistically activate RSAD2 increasing its activity with CTP as substrate about 10-fold. Its function is as follows. Interferon-inducible antiviral protein which plays a major role in the cell antiviral state induced by type I and type II interferon. Catalyzes the conversion of cytidine triphosphate (CTP) to 3'-deoxy-3',4'-didehydro-CTP (ddhCTP) via a SAM-dependent radical mechanism. In turn, ddhCTP acts as a chain terminator for the RNA-dependent RNA polymerases from multiple viruses and directly inhibits viral replication. Therefore, inhibits a wide range of DNA and RNA viruses, including human cytomegalovirus (HCMV), hepatitis C virus (HCV), west Nile virus (WNV), dengue virus, sindbis virus, influenza A virus, sendai virus, vesicular stomatitis virus (VSV), zika virus, and human immunodeficiency virus (HIV-1). Also promotes TLR7 and TLR9-dependent production of IFN-beta production in plasmacytoid dendritic cells (pDCs) by facilitating 'Lys-63'-linked ubiquitination of IRAK1 by TRAF6. Plays a role in CD4+ T-cells activation and differentiation. Facilitates T-cell receptor (TCR)-mediated GATA3 activation and optimal T-helper 2 (Th2) cytokine production by modulating NFKB1 and JUNB activities. Can inhibit secretion of soluble proteins. This Homo sapiens (Human) protein is S-adenosylmethionine-dependent nucleotide dehydratase RSAD2.